Reading from the N-terminus, the 101-residue chain is Small ribosomal subunit protein bS18c (101 aa).

The protein belongs to the bacterial ribosomal protein bS18 family. Part of the 30S ribosomal subunit.

It localises to the plastid. The protein resides in the chloroplast. The protein is Small ribosomal subunit protein bS18c of Aethionema cordifolium (Lebanon stonecress).